The chain runs to 343 residues: Signal peptide peptidase 1 (343 aa).

The Lumenal segment spans residues 1–19 (MKTHERAANLALAGLSLAP). Residues 20–40 (LVVKVEPNVNVILTACLAVYV) traverse the membrane as a helical segment. Residues 41–62 (GCYRSVKPTPPSETMSKEHAMR) lie on the Cytoplasmic side of the membrane. Residues 63–83 (FPLVGSAMLLSLFLLFKFLSK) form a helical membrane-spanning segment. Residues 84–87 (DLVN) are Lumenal-facing. The chain crosses the membrane as a helical span at residues 88 to 108 (AVLTAYFFILGIAALCATLLP). The Cytoplasmic segment spans residues 109-136 (SIKRFLPKEWNDNAIVWCAPFFHSLSVE). The helical transmembrane segment at 137–157 (FTKSQVVASIPGFFFCIWYAA) threads the bilayer. Residues 158 to 160 (KKH) are Lumenal-facing. The helical transmembrane segment at 161–181 (WLANNVLGISFCIQGIEMLSL) threads the bilayer. Residues 182-188 (GSFKTGA) lie on the Cytoplasmic side of the membrane. The helical transmembrane segment at 189-209 (ILLAGLFFYDIFWVFFTPVMV) threads the bilayer. Residue D198 is part of the active site. Residues 210–230 (SVAKSFDAPIKLLFPTGDAAR) lie on the Lumenal side of the membrane. A helical transmembrane segment spans residues 231–251 (PFSMLGLGDIVIPGIFVALAL). D239 is a catalytic residue. The Cytoplasmic portion of the chain corresponds to 252-266 (RFDVSRGIKNRYFNS). The chain crosses the membrane as a helical span at residues 267–287 (AFLGYTVGLTVTIIVMNWFQA). Over 288–290 (AQP) the chain is Lumenal. A PAL motif is present at residues 290–292 (PAL). The helical transmembrane segment at 291-311 (ALLYIVPGVIGFVAVHCLWNG) threads the bilayer. Topologically, residues 312-343 (EVKPLLEYNESKAEEEDAVEEDTDSKQNKKEE) are cytoplasmic. A disordered region spans residues 322-343 (SKAEEEDAVEEDTDSKQNKKEE). Over residues 324 to 334 (AEEEDAVEEDT) the composition is skewed to acidic residues. The Endoplasmic reticulum targeting signal signature appears at 340-343 (KKEE).

It belongs to the peptidase A22B family. Ubiquitous.

It is found in the endoplasmic reticulum membrane. Its function is as follows. Intramembrane-cleaving aspartic protease (I-CLiP) that cleaves type II membrane signal peptides in the hydrophobic plane of the membrane. Catalyzes intramembrane proteolysis of some signal peptides after they have been cleaved from a preprotein, resulting in the release of the fragment from the ER membrane into the cytoplasm. The polypeptide is Signal peptide peptidase 1 (SPP1) (Oryza sativa subsp. japonica (Rice)).